A 123-amino-acid polypeptide reads, in one-letter code: Large ribosomal subunit protein bL12 (123 aa).

This sequence belongs to the bacterial ribosomal protein bL12 family. As to quaternary structure, homodimer. Part of the ribosomal stalk of the 50S ribosomal subunit. Forms a multimeric L10(L12)X complex, where L10 forms an elongated spine to which 2 to 4 L12 dimers bind in a sequential fashion. Binds GTP-bound translation factors.

Forms part of the ribosomal stalk which helps the ribosome interact with GTP-bound translation factors. Is thus essential for accurate translation. The protein is Large ribosomal subunit protein bL12 of Borrelia turicatae (strain 91E135).